The following is a 491-amino-acid chain: Glycogen synthase (491 aa).

K15 is an ADP-alpha-D-glucose binding site.

The protein belongs to the glycosyltransferase 1 family. Bacterial/plant glycogen synthase subfamily.

The enzyme catalyses [(1-&gt;4)-alpha-D-glucosyl](n) + ADP-alpha-D-glucose = [(1-&gt;4)-alpha-D-glucosyl](n+1) + ADP + H(+). The protein operates within glycan biosynthesis; glycogen biosynthesis. Its function is as follows. Synthesizes alpha-1,4-glucan chains using ADP-glucose. This is Glycogen synthase from Hydrogenovibrio crunogenus (strain DSM 25203 / XCL-2) (Thiomicrospira crunogena).